Reading from the N-terminus, the 489-residue chain is Aspartyl/glutamyl-tRNA(Asn/Gln) amidotransferase subunit B (489 aa).

Belongs to the GatB/GatE family. GatB subfamily. In terms of assembly, heterotrimer of A, B and C subunits.

The enzyme catalyses L-glutamyl-tRNA(Gln) + L-glutamine + ATP + H2O = L-glutaminyl-tRNA(Gln) + L-glutamate + ADP + phosphate + H(+). The catalysed reaction is L-aspartyl-tRNA(Asn) + L-glutamine + ATP + H2O = L-asparaginyl-tRNA(Asn) + L-glutamate + ADP + phosphate + 2 H(+). In terms of biological role, allows the formation of correctly charged Asn-tRNA(Asn) or Gln-tRNA(Gln) through the transamidation of misacylated Asp-tRNA(Asn) or Glu-tRNA(Gln) in organisms which lack either or both of asparaginyl-tRNA or glutaminyl-tRNA synthetases. The reaction takes place in the presence of glutamine and ATP through an activated phospho-Asp-tRNA(Asn) or phospho-Glu-tRNA(Gln). The polypeptide is Aspartyl/glutamyl-tRNA(Asn/Gln) amidotransferase subunit B (Polynucleobacter asymbioticus (strain DSM 18221 / CIP 109841 / QLW-P1DMWA-1) (Polynucleobacter necessarius subsp. asymbioticus)).